An 850-amino-acid polypeptide reads, in one-letter code: Envelope glycoprotein gp160 (850 aa).

A signal peptide spans Met1–Asp31. The Extracellular segment spans residues Lys32 to Ile678. Cys53 and Cys73 form a disulfide bridge. N-linked (GlcNAc...) asparagine; by host glycosylation is found at Asn87, Asn129, Asn136, Asn141, Asn142, Asn148, Asn157, Asn161, Asn186, Asn189, Asn198, Asn231, Asn235, Asn242, Asn263, Asn277, Asn296, Asn302, Asn332, and Asn354. 5 disulfides stabilise this stretch: Cys118/Cys206, Cys125/Cys197, Cys130/Cys158, Cys219/Cys248, and Cys229/Cys240. The V1 stretch occupies residues Cys130 to Asn157. Residues Cys158–Cys197 form a V2 region. The tract at residues Cys297–His330 is V3. Cys297 and Cys331 are disulfide-bonded. Residues Ser362–His372 are CD4-binding loop. Disulfide bonds link Cys376–Cys440 and Cys383–Cys413. The V4 stretch occupies residues Cys383–Cys413. N-linked (GlcNAc...) asparagine; by host glycans are attached at residues Asn384, Asn390, Asn401, Asn406, Asn443, and Asn457. V5 regions lie at residues Gly456 to Gly465 and Glu458 to Gly465. The interval Ala506–Ala526 is fusion peptide. The segment at Lys568–Leu586 is immunosuppression. Cys592 and Cys598 form a disulfide bridge. Asn605, Asn610, Asn619, and Asn631 each carry an N-linked (GlcNAc...) asparagine; by host glycan. Residues Lys627–Asp661 adopt a coiled-coil conformation. The interval Ala656–Glu677 is MPER; binding to GalCer. The helical transmembrane segment at Phe679–Ile699 threads the bilayer. Residues Asn700–Leu850 are Cytoplasmic-facing. The YXXL motif; contains endocytosis signal signature appears at Tyr706–Leu709. The interval Pro716–Lys736 is disordered. The S-palmitoyl cysteine; by host moiety is linked to residue Cys758. The short motif at Leu849–Leu850 is the Di-leucine internalization motif element.

Belongs to the HIV-1 env protein family. In terms of assembly, the mature envelope protein (Env) consists of a homotrimer of non-covalently associated gp120-gp41 heterodimers. The resulting complex protrudes from the virus surface as a spike. There seems to be as few as 10 spikes on the average virion. Interacts with host CD4, CCR5 and CXCR4. Gp120 also interacts with the C-type lectins CD209/DC-SIGN and CLEC4M/DC-SIGNR (collectively referred to as DC-SIGN(R)). Gp120 and gp41 interact with GalCer. Gp120 interacts with host ITGA4/ITGB7 complex; on CD4+ T-cells, this interaction results in rapid activation of integrin ITGAL/LFA-1, which facilitates efficient cell-to-cell spreading of HIV-1. Gp120 interacts with cell-associated heparan sulfate; this interaction increases virus infectivity on permissive cells and may be involved in infection of CD4- cells. The mature envelope protein (Env) consists of a homotrimer of non-covalently associated gp120-gp41 heterodimers. The resulting complex protrudes from the virus surface as a spike. There seems to be as few as 10 spikes on the average virion. Highly glycosylated by host. The high number of glycan on the protein is reffered to as 'glycan shield' because it contributes to hide protein sequence from adaptive immune system. In terms of processing, palmitoylation of the transmembrane protein and of Env polyprotein (prior to its proteolytic cleavage) is essential for their association with host cell membrane lipid rafts. Palmitoylation is therefore required for envelope trafficking to classical lipid rafts, but not for viral replication. Post-translationally, specific enzymatic cleavages in vivo yield mature proteins. Envelope glycoproteins are synthesized as an inactive precursor that is heavily N-glycosylated and processed likely by host cell furin in the Golgi to yield the mature SU and TM proteins. The cleavage site between SU and TM requires the minimal sequence [KR]-X-[KR]-R. About 2 of the 9 disulfide bonds of gp41 are reduced by P4HB/PDI, following binding to CD4 receptor.

The protein resides in the virion membrane. It localises to the host cell membrane. Its subcellular location is the host endosome membrane. In terms of biological role, oligomerizes in the host endoplasmic reticulum into predominantly trimers. In a second time, gp160 transits in the host Golgi, where glycosylation is completed. The precursor is then proteolytically cleaved in the trans-Golgi and thereby activated by cellular furin or furin-like proteases to produce gp120 and gp41. Its function is as follows. Attaches the virus to the host lymphoid cell by binding to the primary receptor CD4. This interaction induces a structural rearrangement creating a high affinity binding site for a chemokine coreceptor like CXCR4 and/or CCR5. Acts as a ligand for CD209/DC-SIGN and CLEC4M/DC-SIGNR, which are respectively found on dendritic cells (DCs), and on endothelial cells of liver sinusoids and lymph node sinuses. These interactions allow capture of viral particles at mucosal surfaces by these cells and subsequent transmission to permissive cells. HIV subverts the migration properties of dendritic cells to gain access to CD4+ T-cells in lymph nodes. Virus transmission to permissive T-cells occurs either in trans (without DCs infection, through viral capture and transmission), or in cis (following DCs productive infection, through the usual CD4-gp120 interaction), thereby inducing a robust infection. In trans infection, bound virions remain infectious over days and it is proposed that they are not degraded, but protected in non-lysosomal acidic organelles within the DCs close to the cell membrane thus contributing to the viral infectious potential during DCs' migration from the periphery to the lymphoid tissues. On arrival at lymphoid tissues, intact virions recycle back to DCs' cell surface allowing virus transmission to CD4+ T-cells. Acts as a class I viral fusion protein. Under the current model, the protein has at least 3 conformational states: pre-fusion native state, pre-hairpin intermediate state, and post-fusion hairpin state. During fusion of viral and target intracellular membranes, the coiled coil regions (heptad repeats) assume a trimer-of-hairpins structure, positioning the fusion peptide in close proximity to the C-terminal region of the ectodomain. The formation of this structure appears to drive apposition and subsequent fusion of viral and target cell membranes. Complete fusion occurs in host cell endosomes and is dynamin-dependent, however some lipid transfer might occur at the plasma membrane. The virus undergoes clathrin-dependent internalization long before endosomal fusion, thus minimizing the surface exposure of conserved viral epitopes during fusion and reducing the efficacy of inhibitors targeting these epitopes. Membranes fusion leads to delivery of the nucleocapsid into the cytoplasm. This Human immunodeficiency virus type 1 group M subtype F2 (isolate MP257) (HIV-1) protein is Envelope glycoprotein gp160.